The primary structure comprises 333 residues: UDP-glucose 4-epimerase (333 aa).

NAD(+) is bound by residues 11–12 (YI), 32–37 (DSLVTG), 52–53 (DL), 75–79 (FAAYS), N94, T119, Y143, K147, and F171. Substrate-binding residues include T119 and Y143. The Proton acceptor role is filled by Y143. Substrate-binding positions include N172, 191–192 (HL), 208–210 (MIF), R223, and 284–287 (RSGD).

The protein belongs to the NAD(P)-dependent epimerase/dehydratase family. Homodimer. NAD(+) is required as a cofactor.

The enzyme catalyses UDP-alpha-D-glucose = UDP-alpha-D-galactose. It participates in carbohydrate metabolism; galactose metabolism. Its function is as follows. Involved in the metabolism of galactose. Catalyzes the conversion of UDP-galactose (UDP-Gal) to UDP-glucose (UDP-Glc) through a mechanism involving the transient reduction of NAD. In Streptococcus mutans serotype c (strain ATCC 700610 / UA159), this protein is UDP-glucose 4-epimerase (galE).